The following is a 378-amino-acid chain: Chaperone protein DnaJ (378 aa).

The J domain occupies 5–70 (DYYESLGVAK…QKRAAYDQYG (66 aa)). The segment at 133-211 (GVTKEIRIPA…CHGHGRVEKS (79 aa)) adopts a CR-type zinc-finger fold. The Zn(2+) site is built by Cys146, Cys149, Cys163, Cys166, Cys185, Cys188, Cys199, and Cys202. CXXCXGXG motif repeat units follow at residues 146-153 (CDVCHGNG), 163-170 (CPTCHGNG), 185-192 (CPHCHGRG), and 199-206 (CVKCHGHG).

It belongs to the DnaJ family. In terms of assembly, homodimer. It depends on Zn(2+) as a cofactor.

It localises to the cytoplasm. In terms of biological role, participates actively in the response to hyperosmotic and heat shock by preventing the aggregation of stress-denatured proteins and by disaggregating proteins, also in an autonomous, DnaK-independent fashion. Unfolded proteins bind initially to DnaJ; upon interaction with the DnaJ-bound protein, DnaK hydrolyzes its bound ATP, resulting in the formation of a stable complex. GrpE releases ADP from DnaK; ATP binding to DnaK triggers the release of the substrate protein, thus completing the reaction cycle. Several rounds of ATP-dependent interactions between DnaJ, DnaK and GrpE are required for fully efficient folding. Also involved, together with DnaK and GrpE, in the DNA replication of plasmids through activation of initiation proteins. The polypeptide is Chaperone protein DnaJ (Pectobacterium carotovorum subsp. carotovorum (strain PC1)).